A 431-amino-acid polypeptide reads, in one-letter code: Phosphoribosylamine--glycine ligase (431 aa).

Positions 108–315 (KDFLARHKIP…LVLLIEAALA (208 aa)) constitute an ATP-grasp domain. 134 to 195 (LREKGAPIVI…EEFLDGEEAS (62 aa)) lines the ATP pocket. E285 and N287 together coordinate Mg(2+).

Belongs to the GARS family. Mg(2+) is required as a cofactor. Mn(2+) serves as cofactor.

It catalyses the reaction 5-phospho-beta-D-ribosylamine + glycine + ATP = N(1)-(5-phospho-beta-D-ribosyl)glycinamide + ADP + phosphate + H(+). It functions in the pathway purine metabolism; IMP biosynthesis via de novo pathway; N(1)-(5-phospho-D-ribosyl)glycinamide from 5-phospho-alpha-D-ribose 1-diphosphate: step 2/2. This is Phosphoribosylamine--glycine ligase from Pseudomonas syringae pv. tomato (strain ATCC BAA-871 / DC3000).